A 374-amino-acid polypeptide reads, in one-letter code: Protein dip1 (374 aa).

Belongs to the LDB17 family.

It localises to the cytoplasm. The protein resides in the nucleus. Its subcellular location is the cell tip. May be involved in protein-linked oligosaccharide phosphorylation. In Schizosaccharomyces pombe (strain 972 / ATCC 24843) (Fission yeast), this protein is Protein dip1 (dip1).